The following is a 381-amino-acid chain: Tetraacyldisaccharide 4'-kinase (381 aa).

Residue 78-85 (AVGGTGKT) participates in ATP binding.

Belongs to the LpxK family.

It carries out the reaction a lipid A disaccharide + ATP = a lipid IVA + ADP + H(+). It functions in the pathway glycolipid biosynthesis; lipid IV(A) biosynthesis; lipid IV(A) from (3R)-3-hydroxytetradecanoyl-[acyl-carrier-protein] and UDP-N-acetyl-alpha-D-glucosamine: step 6/6. Its function is as follows. Transfers the gamma-phosphate of ATP to the 4'-position of a tetraacyldisaccharide 1-phosphate intermediate (termed DS-1-P) to form tetraacyldisaccharide 1,4'-bis-phosphate (lipid IVA). This chain is Tetraacyldisaccharide 4'-kinase, found in Syntrophobacter fumaroxidans (strain DSM 10017 / MPOB).